The sequence spans 412 residues: Multifunctional CCA protein (412 aa).

ATP is bound by residues G8 and R11. G8 and R11 together coordinate CTP. 2 residues coordinate Mg(2+): D21 and D23. The ATP site is built by R91, R137, and R140. Positions 91, 137, and 140 each coordinate CTP. An HD domain is found at 228 to 329; sequence TGIHTLMTLS…VKLFDSIDAW (102 aa).

It belongs to the tRNA nucleotidyltransferase/poly(A) polymerase family. Bacterial CCA-adding enzyme type 1 subfamily. Monomer. Can also form homodimers and oligomers. The cofactor is Mg(2+). Ni(2+) is required as a cofactor.

The enzyme catalyses a tRNA precursor + 2 CTP + ATP = a tRNA with a 3' CCA end + 3 diphosphate. It catalyses the reaction a tRNA with a 3' CCA end + 2 CTP + ATP = a tRNA with a 3' CCACCA end + 3 diphosphate. Functionally, catalyzes the addition and repair of the essential 3'-terminal CCA sequence in tRNAs without using a nucleic acid template. Adds these three nucleotides in the order of C, C, and A to the tRNA nucleotide-73, using CTP and ATP as substrates and producing inorganic pyrophosphate. tRNA 3'-terminal CCA addition is required both for tRNA processing and repair. Also involved in tRNA surveillance by mediating tandem CCA addition to generate a CCACCA at the 3' terminus of unstable tRNAs. While stable tRNAs receive only 3'-terminal CCA, unstable tRNAs are marked with CCACCA and rapidly degraded. The chain is Multifunctional CCA protein from Shigella flexneri serotype 5b (strain 8401).